Here is a 986-residue protein sequence, read N- to C-terminus: Bifunctional glutamine synthetase adenylyltransferase/adenylyl-removing enzyme (986 aa).

The segment at 1–475 (MSFPLAHVDA…VFDHLIGEEK (475 aa)) is adenylyl removase. The adenylyl transferase stretch occupies residues 481 to 986 (TETLWHDFLE…LFEHNDKYEE (506 aa)).

The protein belongs to the GlnE family. Mg(2+) serves as cofactor.

It carries out the reaction [glutamine synthetase]-O(4)-(5'-adenylyl)-L-tyrosine + phosphate = [glutamine synthetase]-L-tyrosine + ADP. It catalyses the reaction [glutamine synthetase]-L-tyrosine + ATP = [glutamine synthetase]-O(4)-(5'-adenylyl)-L-tyrosine + diphosphate. Involved in the regulation of glutamine synthetase GlnA, a key enzyme in the process to assimilate ammonia. When cellular nitrogen levels are high, the C-terminal adenylyl transferase (AT) inactivates GlnA by covalent transfer of an adenylyl group from ATP to specific tyrosine residue of GlnA, thus reducing its activity. Conversely, when nitrogen levels are low, the N-terminal adenylyl removase (AR) activates GlnA by removing the adenylyl group by phosphorolysis, increasing its activity. The regulatory region of GlnE binds the signal transduction protein PII (GlnB) which indicates the nitrogen status of the cell. This is Bifunctional glutamine synthetase adenylyltransferase/adenylyl-removing enzyme from Pasteurella multocida (strain Pm70).